A 322-amino-acid chain; its full sequence is Ras-like protein 2 (322 aa).

GTP contacts are provided by residues 20–25 (GVGKSA), 36–42 (VDEYDPT), 66–67 (AG), and 123–126 (NKSD). Residues 39–47 (YDPTIEDSY) carry the Effector region motif. A Glycyl lysine isopeptide (Lys-Gly) (interchain with G-Cter in ubiquitin) cross-link involves residue K131. 153–155 (SAK) contacts GTP. Residues 178–322 (YNKTLTENDN…SGSGGCCIIS (145 aa)) form a disordered region. A compositionally biased stretch (polar residues) spans 180–205 (KTLTENDNSKQTSQDTKGSGANSVPR). Residues S198, S202, S207, S214, S235, and S238 each carry the phosphoserine modification. Residues 215-252 (NAANGKNVNSSTTVVNARNASIESKTGLAGNQATNGKT) are compositionally biased toward polar residues. The segment covering 261–284 (NSTGQAGQANAQSANTVNNRVNNN) has biased composition (low complexity). Positions 285–294 (SKAGQVSNAK) are enriched in polar residues. The S-palmitoyl cysteine moiety is linked to residue C318. C319 carries the cysteine methyl ester modification. A lipid anchor (S-farnesyl cysteine) is attached at C319. The propeptide at 320–322 (IIS) is removed in mature form.

The protein belongs to the small GTPase superfamily. Ras family. Post-translationally, farnesylated by RAM1-RAM2, which is required for targeting RAS2 to the cytoplasmic site of the endoplasmic reticulum, where proteolytic processing of the C-terminus by RCE1 and methylation of the resulting carboxyl group by STE14 occurs. Palmitoylated by the ERF2-SHR5 complex, which is required for proper plasma membrane localization of RAS2.

Its subcellular location is the cell membrane. It catalyses the reaction GTP + H2O = GDP + phosphate + H(+). With respect to regulation, alternates between an inactive form bound to GDP and an active form bound to GTP. Activated by guanine nucleotide-exchange factor (GEF) CDC25 and inactivated by GTPase-activating proteins (GAPs) IRA1 and IRA2. Functionally, the S.cerevisiae Ras proteins modulate the activity of the adenylate cyclase catalytic subunit and therefore affect the biosynthesis of cyclic-AMP. The sequence is that of Ras-like protein 2 (RAS2) from Saccharomyces cerevisiae (strain ATCC 204508 / S288c) (Baker's yeast).